The chain runs to 720 residues: Putative glutamine--fructose-6-phosphate aminotransferase [isomerizing] (720 aa).

Catalysis depends on C2, which acts as the Nucleophile; for GATase activity. Positions 2–321 constitute a Glutamine amidotransferase type-2 domain; it reads CGIFGYCNFL…DNDIAHIYDG (320 aa). Over residues 266–280 the composition is skewed to polar residues; the sequence is STTSTFNHGSSTETP. The disordered stretch occupies residues 266–285; the sequence is STTSTFNHGSSTETPAENGL. SIS domains are found at residues 393–532 and 565–710; these read WLTE…DLVS and CDKK…VDLP.

It catalyses the reaction D-fructose 6-phosphate + L-glutamine = D-glucosamine 6-phosphate + L-glutamate. It participates in nucleotide-sugar biosynthesis; UDP-N-acetyl-alpha-D-glucosamine biosynthesis; alpha-D-glucosamine 6-phosphate from D-fructose 6-phosphate: step 1/1. Functionally, involved in amino sugar synthesis (formation of chitin, supplies the amino sugars of asparagine-linked oligosaccharides of glycoproteins). The chain is Putative glutamine--fructose-6-phosphate aminotransferase [isomerizing] from Saccharomyces cerevisiae (strain RM11-1a) (Baker's yeast).